The chain runs to 523 residues: 2-isopropylmalate synthase (523 aa).

The Pyruvate carboxyltransferase domain occupies 5–267 (VIIFDTTLRD…HTNINHHEIW (263 aa)). Mn(2+)-binding residues include aspartate 14, histidine 202, histidine 204, and asparagine 238. Residues 392–523 (RLDYFSVQSG…QNKENNKETV (132 aa)) form a regulatory domain region.

Belongs to the alpha-IPM synthase/homocitrate synthase family. LeuA type 1 subfamily. Homodimer. Mn(2+) serves as cofactor.

The protein localises to the cytoplasm. The catalysed reaction is 3-methyl-2-oxobutanoate + acetyl-CoA + H2O = (2S)-2-isopropylmalate + CoA + H(+). It participates in amino-acid biosynthesis; L-leucine biosynthesis; L-leucine from 3-methyl-2-oxobutanoate: step 1/4. In terms of biological role, catalyzes the condensation of the acetyl group of acetyl-CoA with 3-methyl-2-oxobutanoate (2-ketoisovalerate) to form 3-carboxy-3-hydroxy-4-methylpentanoate (2-isopropylmalate). The polypeptide is 2-isopropylmalate synthase (Salmonella paratyphi A (strain ATCC 9150 / SARB42)).